The following is a 310-amino-acid chain: DNA repair nuclease APEX1 (310 aa).

The interval 1–51 (MPKRAKKNEEGVDGEADNGTAAAKKEKKGKEPEAPILYEDPPEKLTSKDGR) is disordered. Basic and acidic residues predominate over residues 41–51 (PPEKLTSKDGR). Positions 63 and 89 each coordinate Mg(2+). The active site involves Y164. Mg(2+) is bound by residues D203, N205, and D300. D203 functions as the Proton donor/acceptor in the catalytic mechanism.

Belongs to the DNA repair enzymes AP/ExoA family. It depends on Mg(2+) as a cofactor. The cofactor is Mn(2+).

It is found in the nucleus. The protein localises to the nucleolus. Its subcellular location is the nucleus speckle. It localises to the endoplasmic reticulum. The protein resides in the cytoplasm. It is found in the mitochondrion. The catalysed reaction is Exonucleolytic cleavage in the 3'- to 5'-direction to yield nucleoside 5'-phosphates.. Functions as an apurinic/apyrimidinic (AP) endodeoxyribonuclease in the DNA base excision repair (BER) pathway of DNA lesions induced by oxidative and alkylating agents. Initiates repair of AP sites in DNA by catalyzing hydrolytic incision of the phosphodiester backbone immediately adjacent to the damage, generating a single-strand break with 5'-deoxyribose phosphate and 3'-hydroxyl ends. Has 3'-5' exoribonuclease activity on mismatched deoxyribonucleotides at the 3' termini of nicked or gapped DNA molecules during short-patch BER. May also play a role in the epigenetic regulation of gene expression by participating in DNA demethylation. Required for passage through the mid-blastula transition MBT. May also act as an endoribonuclease involved in the control of single-stranded RNA metabolism. Has no redox activity. Binds DNA and RNA. In Danio rerio (Zebrafish), this protein is DNA repair nuclease APEX1 (apex1).